The primary structure comprises 187 residues: Putative lipoprotein LppJ (187 aa).

Residues 1-28 (MPHSTADRRLRLTRQALLAAAVVPLLAG) form the signal peptide. Cys29 carries the N-palmitoyl cysteine lipid modification. Cys29 carries the S-diacylglycerol cysteine lipid modification.

The protein localises to the cell membrane. This is Putative lipoprotein LppJ (lppJ) from Mycobacterium tuberculosis (strain CDC 1551 / Oshkosh).